The sequence spans 629 residues: DNA mismatch repair protein MutL (629 aa).

Belongs to the DNA mismatch repair MutL/HexB family.

Functionally, this protein is involved in the repair of mismatches in DNA. It is required for dam-dependent methyl-directed DNA mismatch repair. May act as a 'molecular matchmaker', a protein that promotes the formation of a stable complex between two or more DNA-binding proteins in an ATP-dependent manner without itself being part of a final effector complex. The polypeptide is DNA mismatch repair protein MutL (Haemophilus influenzae (strain PittGG)).